The chain runs to 1129 residues: A-kinase anchor protein 11 (1129 aa).

Basic residues predominate over residues 1–12 (MQKMQCHLRRPL). The interval 1–21 (MQKMQCHLRRPLHSSSSFSSQ) is disordered. Thr251 and Thr363 each carry phosphothreonine. 3 disordered regions span residues 354-376 (IRDR…QTSS), 394-416 (EFAP…SENE), and 434-455 (SEEV…SEHS). Over residues 404–416 (PHNSSVGSLSENE) the composition is skewed to polar residues. 3 positions are modified to phosphoserine: Ser434, Ser439, and Ser440. A compositionally biased stretch (basic and acidic residues) spans 442-455 (GEEHPEMDVKSEHS). Ser595 is modified (phosphoserine). Thr742 is modified (phosphothreonine). Phosphoserine is present on Ser835. The tract at residues 905-918 (LAEKIVAEAIEKAE) is PKA-RII binding region. Residues 962-1061 (SKEVEDFQST…QEDGAEGLQP (100 aa)) form a disordered region. The segment covering 968–995 (FQSTESLGSQQMNLSVGEDSTGSWSNLS) has biased composition (polar residues). Positions 1002–1011 (DESSSFHHLS) are enriched in basic and acidic residues. Residues 1012 to 1028 (ESSNGNSSSWSSLGLEG) show a composition bias toward low complexity. Polar residues predominate over residues 1033-1042 (NNLSFPTSDS). Acidic residues predominate over residues 1043-1056 (DGPDDRESEQEDGA).

As to expression, expressed in brain and testis.

It localises to the peroxisome. Functionally, binds to type II regulatory subunits of protein kinase A and anchors/targets them. The sequence is that of A-kinase anchor protein 11 (Akap11) from Rattus norvegicus (Rat).